Here is a 344-residue protein sequence, read N- to C-terminus: Anthranilate phosphoribosyltransferase (344 aa).

5-phospho-alpha-D-ribose 1-diphosphate is bound by residues glycine 85, 88-89 (GD), threonine 93, 95-98 (NIST), 113-121 (KHGGRSVSS), and serine 125. Position 85 (glycine 85) interacts with anthranilate. Serine 97 is a Mg(2+) binding site. Position 171 (arginine 171) interacts with anthranilate. The Mg(2+) site is built by aspartate 230 and glutamate 231.

It belongs to the anthranilate phosphoribosyltransferase family. As to quaternary structure, homodimer. The cofactor is Mg(2+).

It catalyses the reaction N-(5-phospho-beta-D-ribosyl)anthranilate + diphosphate = 5-phospho-alpha-D-ribose 1-diphosphate + anthranilate. It participates in amino-acid biosynthesis; L-tryptophan biosynthesis; L-tryptophan from chorismate: step 2/5. Functionally, catalyzes the transfer of the phosphoribosyl group of 5-phosphorylribose-1-pyrophosphate (PRPP) to anthranilate to yield N-(5'-phosphoribosyl)-anthranilate (PRA). This is Anthranilate phosphoribosyltransferase from Delftia acidovorans (strain DSM 14801 / SPH-1).